The primary structure comprises 191 residues: Leucyl/phenylalanyl-tRNA--protein transferase (191 aa).

This sequence belongs to the L/F-transferase family.

It localises to the cytoplasm. It carries out the reaction N-terminal L-lysyl-[protein] + L-leucyl-tRNA(Leu) = N-terminal L-leucyl-L-lysyl-[protein] + tRNA(Leu) + H(+). The catalysed reaction is N-terminal L-arginyl-[protein] + L-leucyl-tRNA(Leu) = N-terminal L-leucyl-L-arginyl-[protein] + tRNA(Leu) + H(+). The enzyme catalyses L-phenylalanyl-tRNA(Phe) + an N-terminal L-alpha-aminoacyl-[protein] = an N-terminal L-phenylalanyl-L-alpha-aminoacyl-[protein] + tRNA(Phe). Functionally, functions in the N-end rule pathway of protein degradation where it conjugates Leu, Phe and, less efficiently, Met from aminoacyl-tRNAs to the N-termini of proteins containing an N-terminal arginine or lysine. This is Leucyl/phenylalanyl-tRNA--protein transferase from Nostoc sp. (strain PCC 7120 / SAG 25.82 / UTEX 2576).